Reading from the N-terminus, the 1097-residue chain is MRYAELQVTTHFSFLRGASSAIELFETAKSLGIDAIGVVDRNSLAGIVRALEASRATGVRLVVGCRLDLQDGMSILVYPTDRTAYSRLARLITLGKGRGGKDNCILMLDDIAQYGEGLLGILVPDLADDTCAVQLRKMAEVFGDLAYLSLCLRRRPNDQLRLHELSNMATRFKVKTVVTNDVLFHEPGRRQLQDIVTCIRNNTTIDTVGFERERHADRYLKPPEEMERLFPRYRQALRRTMEIVDRCKFSLEELTYQYPEEAIVPRKTAQESLEHYVWQCVPDRYPQGLPPKTLQIIRHELDLIHKMKYAPYFLTVFSIVRFARAKGILCQGRGSAANSAVCYILGVTSIDPETNNLLFERFVSQERDEPPDIDVDFEHERREEVIQWIYKTYGKEKAALCATVNRYRAKGAIRDVGKALGLPEDLIKALSSGMWSWSQETSDRNVRELNLNPDDRRLTLTLQLAQQLMGAPRHLGQHPGGFVLTHDRLDDLVPIEPSTMEDRQIIEWDKDDVEALKFMKVDVLALGMLTCMSKVFALIREHKGDDLDLAKIRQEDKATYEMICKADTLGTFQIESRAQMAMLPRLKPKTFYDLVVQVAIVRPGPIQGDMVHPYLRRREKKEDVDYPTPELEAVLGKTLGVPLFQESAMRVAMVCAGFTGGEADQLRKSMATFKFTGGVSRFKEKLVSGMVKNGYTPEFAEKTFSRLEGFGSYGFPESHAASFALIAYASNYVKCHFPDVFCAALLNSQPMGFYAPAQIVGDARAHGVEVRPVCVNRSRWDCTLERIGTTQQHAVRLGMRMVKGLVVADVARIVAARMNGPFDSVDDMWRRSGVPAASLVELAHADAFQPSLKLARRDVLWAIKALRDEPLPLFAAAAEREMKTIAEQNEPEVELRQMTKGHNVVEDYGHIGLTLRDHPIAFLRTDLAKRNIVTCEEAMTARDGRWVITAGLVLVRQKPGSAKGVMFITIEDETGPANIVVWPKLFEKRRRIVLGSSMMAIHGRIQREGEVVHLIAQQLFDLTSDLSGLADRDMEFKLPTGRGDEFAHGSPGGGDSRDRSPPKPRDIVVPLCRARHKGIDPEPETMPSAFPKPRDFR.

Residues Pro-1039–Arg-1097 are disordered. Over residues Asp-1055–Asp-1066 the composition is skewed to basic and acidic residues.

The protein belongs to the DNA polymerase type-C family. DnaE2 subfamily.

It localises to the cytoplasm. The catalysed reaction is DNA(n) + a 2'-deoxyribonucleoside 5'-triphosphate = DNA(n+1) + diphosphate. In terms of biological role, DNA polymerase involved in damage-induced mutagenesis and translesion synthesis (TLS). It is not the major replicative DNA polymerase. This Allorhizobium ampelinum (strain ATCC BAA-846 / DSM 112012 / S4) (Agrobacterium vitis (strain S4)) protein is Error-prone DNA polymerase.